The sequence spans 326 residues: tRNA-modifying protein YgfZ (326 aa).

Tryptophan 27 and tryptophan 189 together coordinate folate.

It belongs to the tRNA-modifying YgfZ family.

It localises to the cytoplasm. In terms of biological role, folate-binding protein involved in regulating the level of ATP-DnaA and in the modification of some tRNAs. It is probably a key factor in regulatory networks that act via tRNA modification, such as initiation of chromosomal replication. The polypeptide is tRNA-modifying protein YgfZ (Escherichia coli O17:K52:H18 (strain UMN026 / ExPEC)).